A 111-amino-acid polypeptide reads, in one-letter code: Nucleoid-associated protein PSEEN1789 (111 aa).

2 disordered regions span residues 1 to 25 (MMKGGMAGLMKQAQQMQEKMQKMQE) and 89 to 111 (NSQDKMGSMTAGMQLPPGFKMPF).

The protein belongs to the YbaB/EbfC family. As to quaternary structure, homodimer.

It is found in the cytoplasm. The protein resides in the nucleoid. Functionally, binds to DNA and alters its conformation. May be involved in regulation of gene expression, nucleoid organization and DNA protection. The protein is Nucleoid-associated protein PSEEN1789 of Pseudomonas entomophila (strain L48).